A 118-amino-acid polypeptide reads, in one-letter code: Ribonuclease P protein component (118 aa).

This sequence belongs to the RnpA family. As to quaternary structure, consists of a catalytic RNA component (M1 or rnpB) and a protein subunit.

The enzyme catalyses Endonucleolytic cleavage of RNA, removing 5'-extranucleotides from tRNA precursor.. RNaseP catalyzes the removal of the 5'-leader sequence from pre-tRNA to produce the mature 5'-terminus. It can also cleave other RNA substrates such as 4.5S RNA. The protein component plays an auxiliary but essential role in vivo by binding to the 5'-leader sequence and broadening the substrate specificity of the ribozyme. In Mycoplasma pneumoniae (strain ATCC 29342 / M129 / Subtype 1) (Mycoplasmoides pneumoniae), this protein is Ribonuclease P protein component.